Here is a 263-residue protein sequence, read N- to C-terminus: Phosphatidylglycerol--prolipoprotein diacylglyceryl transferase (263 aa).

A run of 4 helical transmembrane segments spans residues Leu16 to Ala36, Phe55 to Tyr75, Glu92 to Cys112, and Leu117 to Gly137. Residue Arg138 participates in a 1,2-diacyl-sn-glycero-3-phospho-(1'-sn-glycerol) binding. The next 3 helical transmembrane spans lie at Gln172–Phe192, Gly201–Phe221, and Ser234–Ile254.

This sequence belongs to the Lgt family.

The protein localises to the cell inner membrane. The enzyme catalyses L-cysteinyl-[prolipoprotein] + a 1,2-diacyl-sn-glycero-3-phospho-(1'-sn-glycerol) = an S-1,2-diacyl-sn-glyceryl-L-cysteinyl-[prolipoprotein] + sn-glycerol 1-phosphate + H(+). It functions in the pathway protein modification; lipoprotein biosynthesis (diacylglyceryl transfer). Catalyzes the transfer of the diacylglyceryl group from phosphatidylglycerol to the sulfhydryl group of the N-terminal cysteine of a prolipoprotein, the first step in the formation of mature lipoproteins. This is Phosphatidylglycerol--prolipoprotein diacylglyceryl transferase from Rickettsia bellii (strain OSU 85-389).